The primary structure comprises 79 residues: NAD(P)H-quinone oxidoreductase subunit L (79 aa).

The next 2 helical transmembrane spans lie at 10–30 and 48–68; these read IIIA…IPAV and GFMY…SPFL.

Belongs to the complex I NdhL subunit family. NDH-1 can be composed of about 15 different subunits; different subcomplexes with different compositions have been identified which probably have different functions.

The protein resides in the cellular thylakoid membrane. The enzyme catalyses a plastoquinone + NADH + (n+1) H(+)(in) = a plastoquinol + NAD(+) + n H(+)(out). The catalysed reaction is a plastoquinone + NADPH + (n+1) H(+)(in) = a plastoquinol + NADP(+) + n H(+)(out). Its function is as follows. NDH-1 shuttles electrons from an unknown electron donor, via FMN and iron-sulfur (Fe-S) centers, to quinones in the respiratory and/or the photosynthetic chain. The immediate electron acceptor for the enzyme in this species is believed to be plastoquinone. Couples the redox reaction to proton translocation, and thus conserves the redox energy in a proton gradient. Cyanobacterial NDH-1 also plays a role in inorganic carbon-concentration. In Microcystis aeruginosa (strain NIES-843 / IAM M-2473), this protein is NAD(P)H-quinone oxidoreductase subunit L.